A 158-amino-acid polypeptide reads, in one-letter code: C-type lectin (158 aa).

Residues 1–23 (MWQFTVVSLGWLAVFLSLSGAKG) form the signal peptide. 3 disulfide bridges follow: Cys26–Cys37, Cys54–Cys154, and Cys129–Cys146. Residues 33-155 (RNGVCNKLFP…CASLHPFICQ (123 aa)) enclose the C-type lectin domain. The short motif at 119–121 (EPN) is the Mannose-binding element. Residues Glu127, Asn142, and Asp143 each contribute to the Ca(2+) site.

The protein belongs to the true venom lectin family. In terms of tissue distribution, expressed by the venom gland.

It localises to the secreted. Its function is as follows. Mannose-binding lectin which recognizes specific carbohydrate structures and agglutinates a variety of animal cells by binding to cell-surface glycoproteins and glycolipids. May be a calcium-dependent lectin. The polypeptide is C-type lectin (Cerberus rynchops (Dog-faced water snake)).